Consider the following 360-residue polypeptide: DNA replication and repair protein RecF (360 aa).

30 to 37 (GHNGSGKT) contributes to the ATP binding site.

The protein belongs to the RecF family.

The protein resides in the cytoplasm. Functionally, the RecF protein is involved in DNA metabolism; it is required for DNA replication and normal SOS inducibility. RecF binds preferentially to single-stranded, linear DNA. It also seems to bind ATP. The sequence is that of DNA replication and repair protein RecF from Actinobacillus pleuropneumoniae serotype 7 (strain AP76).